The sequence spans 392 residues: Flagellar P-ring protein (392 aa).

Residues 1-38 form the signal peptide; the sequence is MKPFARRALLTAEPIRALLLAASLLAATLGLMPAEAFG.

This sequence belongs to the FlgI family. The basal body constitutes a major portion of the flagellar organelle and consists of four rings (L,P,S, and M) mounted on a central rod.

It localises to the periplasm. The protein resides in the bacterial flagellum basal body. Assembles around the rod to form the L-ring and probably protects the motor/basal body from shearing forces during rotation. This chain is Flagellar P-ring protein, found in Paramagnetospirillum magneticum (strain ATCC 700264 / AMB-1) (Magnetospirillum magneticum).